A 192-amino-acid chain; its full sequence is Adenylate kinase (192 aa).

12–17 (GSGKTT) is a binding site for ATP. The interval 34 to 63 (STGDLLRAQVASGSELGKTIDSFISKGNLV) is NMP. AMP is bound by residues Thr-35, Arg-40, 61-63 (NLV), 88-91 (GYPR), and Gln-95. Residues 130–136 (GRNRGAD) form an LID region. Arg-131 serves as a coordination point for ATP. Positions 133 and 145 each coordinate AMP. Arg-173 serves as a coordination point for ATP.

The protein belongs to the adenylate kinase family. Monomer.

The protein localises to the cytoplasm. It carries out the reaction AMP + ATP = 2 ADP. It participates in purine metabolism; AMP biosynthesis via salvage pathway; AMP from ADP: step 1/1. Functionally, catalyzes the reversible transfer of the terminal phosphate group between ATP and AMP. Plays an important role in cellular energy homeostasis and in adenine nucleotide metabolism. This chain is Adenylate kinase, found in Campylobacter jejuni subsp. doylei (strain ATCC BAA-1458 / RM4099 / 269.97).